Here is a 72-residue protein sequence, read N- to C-terminus: Large ribosomal subunit protein bL31c (72 aa).

This sequence belongs to the bacterial ribosomal protein bL31 family. Type A subfamily. As to quaternary structure, part of the 50S ribosomal subunit.

It is found in the plastid. Its subcellular location is the chloroplast. Functionally, binds the 23S rRNA. This is Large ribosomal subunit protein bL31c (rpl31) from Phaeodactylum tricornutum (strain CCAP 1055/1).